A 307-amino-acid chain; its full sequence is Elongation factor Ts (307 aa).

Residues 80 to 83 form an involved in Mg(2+) ion dislocation from EF-Tu region; that stretch reads TDFV.

This sequence belongs to the EF-Ts family.

The protein localises to the cytoplasm. Functionally, associates with the EF-Tu.GDP complex and induces the exchange of GDP to GTP. It remains bound to the aminoacyl-tRNA.EF-Tu.GTP complex up to the GTP hydrolysis stage on the ribosome. The protein is Elongation factor Ts of Albidiferax ferrireducens (strain ATCC BAA-621 / DSM 15236 / T118) (Rhodoferax ferrireducens).